Consider the following 305-residue polypeptide: Glycine--tRNA ligase alpha subunit (305 aa).

The protein belongs to the class-II aminoacyl-tRNA synthetase family. In terms of assembly, tetramer of two alpha and two beta subunits.

It is found in the cytoplasm. The catalysed reaction is tRNA(Gly) + glycine + ATP = glycyl-tRNA(Gly) + AMP + diphosphate. In Vibrio campbellii (strain ATCC BAA-1116), this protein is Glycine--tRNA ligase alpha subunit.